Consider the following 160-residue polypeptide: Transcription elongation factor GreA (160 aa).

Residues 49 to 77 adopt a coiled-coil conformation; sequence SEYQSAKDEQAFVEGRIQTLKNMIDNAEI.

The protein belongs to the GreA/GreB family.

Its function is as follows. Necessary for efficient RNA polymerase transcription elongation past template-encoded arresting sites. The arresting sites in DNA have the property of trapping a certain fraction of elongating RNA polymerases that pass through, resulting in locked ternary complexes. Cleavage of the nascent transcript by cleavage factors such as GreA or GreB allows the resumption of elongation from the new 3'terminus. GreA releases sequences of 2 to 3 nucleotides. This chain is Transcription elongation factor GreA, found in Leuconostoc mesenteroides subsp. mesenteroides (strain ATCC 8293 / DSM 20343 / BCRC 11652 / CCM 1803 / JCM 6124 / NCDO 523 / NBRC 100496 / NCIMB 8023 / NCTC 12954 / NRRL B-1118 / 37Y).